The following is a 431-amino-acid chain: Serine hydroxymethyltransferase 2 (431 aa).

Residues Leu-131 and 135–137 (GHL) each bind (6S)-5,6,7,8-tetrahydrofolate. Position 240 is an N6-(pyridoxal phosphate)lysine (Lys-240).

The protein belongs to the SHMT family. As to quaternary structure, homodimer. It depends on pyridoxal 5'-phosphate as a cofactor.

It localises to the cytoplasm. It carries out the reaction (6R)-5,10-methylene-5,6,7,8-tetrahydrofolate + glycine + H2O = (6S)-5,6,7,8-tetrahydrofolate + L-serine. It participates in one-carbon metabolism; tetrahydrofolate interconversion. Its pathway is amino-acid biosynthesis; glycine biosynthesis; glycine from L-serine: step 1/1. In terms of biological role, catalyzes the reversible interconversion of serine and glycine with tetrahydrofolate (THF) serving as the one-carbon carrier. This reaction serves as the major source of one-carbon groups required for the biosynthesis of purines, thymidylate, methionine, and other important biomolecules. Also exhibits THF-independent aldolase activity toward beta-hydroxyamino acids, producing glycine and aldehydes, via a retro-aldol mechanism. The protein is Serine hydroxymethyltransferase 2 of Photobacterium profundum (strain SS9).